A 156-amino-acid polypeptide reads, in one-letter code: ATP synthase subunit b (156 aa).

A helical transmembrane segment spans residues 7 to 26; the sequence is LIGQLIAFALFVAFCMKYVW.

The protein belongs to the ATPase B chain family. As to quaternary structure, F-type ATPases have 2 components, F(1) - the catalytic core - and F(0) - the membrane proton channel. F(1) has five subunits: alpha(3), beta(3), gamma(1), delta(1), epsilon(1). F(0) has three main subunits: a(1), b(2) and c(10-14). The alpha and beta chains form an alternating ring which encloses part of the gamma chain. F(1) is attached to F(0) by a central stalk formed by the gamma and epsilon chains, while a peripheral stalk is formed by the delta and b chains.

The protein localises to the cell inner membrane. In terms of biological role, f(1)F(0) ATP synthase produces ATP from ADP in the presence of a proton or sodium gradient. F-type ATPases consist of two structural domains, F(1) containing the extramembraneous catalytic core and F(0) containing the membrane proton channel, linked together by a central stalk and a peripheral stalk. During catalysis, ATP synthesis in the catalytic domain of F(1) is coupled via a rotary mechanism of the central stalk subunits to proton translocation. Component of the F(0) channel, it forms part of the peripheral stalk, linking F(1) to F(0). The polypeptide is ATP synthase subunit b (Haemophilus ducreyi (strain 35000HP / ATCC 700724)).